The chain runs to 100 residues: NAD(P)H-quinone oxidoreductase subunit 4L, chloroplastic (100 aa).

Transmembrane regions (helical) follow at residues Met1–Ile21, Ala29–Asn49, and Ile63–Ile83.

This sequence belongs to the complex I subunit 4L family. In terms of assembly, NDH is composed of at least 16 different subunits, 5 of which are encoded in the nucleus.

It is found in the plastid. The protein resides in the chloroplast thylakoid membrane. The enzyme catalyses a plastoquinone + NADH + (n+1) H(+)(in) = a plastoquinol + NAD(+) + n H(+)(out). It carries out the reaction a plastoquinone + NADPH + (n+1) H(+)(in) = a plastoquinol + NADP(+) + n H(+)(out). Functionally, NDH shuttles electrons from NAD(P)H:plastoquinone, via FMN and iron-sulfur (Fe-S) centers, to quinones in the photosynthetic chain and possibly in a chloroplast respiratory chain. The immediate electron acceptor for the enzyme in this species is believed to be plastoquinone. Couples the redox reaction to proton translocation, and thus conserves the redox energy in a proton gradient. This is NAD(P)H-quinone oxidoreductase subunit 4L, chloroplastic from Angiopteris evecta (Mule's foot fern).